We begin with the raw amino-acid sequence, 647 residues long: Leucine aminopeptidase 2 (647 aa).

Residues Gln-169 to Gln-171 and Pro-295 to Glu-300 each bind substrate. His-324 lines the Zn(2+) pocket. The Proton acceptor role is filled by Glu-325. Residues His-328 and Glu-347 each coordinate Zn(2+). The active-site Proton donor is the Tyr-418.

The protein belongs to the peptidase M1 family. It depends on Zn(2+) as a cofactor.

It is found in the cytoplasm. It localises to the nucleus. It catalyses the reaction an epoxide + H2O = an ethanediol. Aminopeptidase that preferentially cleaves di- and tripeptides. Also has low epoxide hydrolase activity (in vitro). Can hydrolyze the epoxide leukotriene LTA(4) but it forms preferentially 5,6-dihydroxy-7,9,11,14-eicosatetraenoic acid rather than the cytokine leukotriene B(4) as the product compared to the homologous mammalian enzyme (in vitro). The sequence is that of Leucine aminopeptidase 2 from Yarrowia lipolytica (strain CLIB 122 / E 150) (Yeast).